A 63-amino-acid chain; its full sequence is MGIKPSYIKNFGLELIGRYGDRFTPDFDENKHQVSELTVIDSKRVRNRIAGFITRKVNTKKHL.

Belongs to the eukaryotic ribosomal protein eS17 family.

The protein is Small ribosomal subunit protein eS17 of Methanosphaerula palustris (strain ATCC BAA-1556 / DSM 19958 / E1-9c).